An 893-amino-acid polypeptide reads, in one-letter code: Protein translocase subunit SecA (893 aa).

ATP contacts are provided by residues Gln87, 105–109 (GEGKT), and Asp512. Basic and acidic residues predominate over residues 840-849 (VEEQHRKSEE). The tract at residues 840-893 (VEEQHRKSEEVPMDFQHQSASSPSEQAQTPRVGRNEPCPCGSGKKYKQCHGKLA) is disordered. Residues 855 to 868 (QHQSASSPSEQAQT) show a composition bias toward polar residues. 4 residues coordinate Zn(2+): Cys877, Cys879, Cys888, and His889. Residues 883–893 (KKYKQCHGKLA) are compositionally biased toward basic residues.

This sequence belongs to the SecA family. Monomer and homodimer. Part of the essential Sec protein translocation apparatus which comprises SecA, SecYEG and auxiliary proteins SecDF-YajC and YidC. Zn(2+) is required as a cofactor.

The protein localises to the cell inner membrane. Its subcellular location is the cytoplasm. It carries out the reaction ATP + H2O + cellular proteinSide 1 = ADP + phosphate + cellular proteinSide 2.. Its function is as follows. Part of the Sec protein translocase complex. Interacts with the SecYEG preprotein conducting channel. Has a central role in coupling the hydrolysis of ATP to the transfer of proteins into and across the cell membrane, serving both as a receptor for the preprotein-SecB complex and as an ATP-driven molecular motor driving the stepwise translocation of polypeptide chains across the membrane. This chain is Protein translocase subunit SecA, found in Colwellia psychrerythraea (strain 34H / ATCC BAA-681) (Vibrio psychroerythus).